A 632-amino-acid polypeptide reads, in one-letter code: Mitoguardin 1 (632 aa).

A helical transmembrane segment spans residues P70 to A90. 2 positions are modified to phosphoserine: S289 and S293.

It belongs to the mitoguardin family. As to quaternary structure, homodimer and heterodimer; forms heterodimers with MIGA2. Interacts with PLD6/MitoPLD.

The protein localises to the mitochondrion outer membrane. Its function is as follows. Regulator of mitochondrial fusion: acts by forming homo- and heterodimers at the mitochondrial outer membrane and facilitating the formation of PLD6/MitoPLD dimers. May act by regulating phospholipid metabolism via PLD6/MitoPLD. In Homo sapiens (Human), this protein is Mitoguardin 1.